The sequence spans 60 residues: UPF0434 protein NMA0874 (60 aa).

The protein belongs to the UPF0434 family.

The polypeptide is UPF0434 protein NMA0874 (Neisseria meningitidis serogroup A / serotype 4A (strain DSM 15465 / Z2491)).